The primary structure comprises 926 residues: Peripheral plasma membrane protein CASK (926 aa).

Residues 12-276 enclose the Protein kinase domain; it reads YELCEVIGKG…VYEALNHPWL (265 aa). ATP is bound by residues 18-26 and Lys41; that span reads IGKGPFSVV. At Ser51 the chain carries Phosphoserine. Asp141 is an active-site residue. Ser151 and Ser155 each carry phosphoserine; by autocatalysis. Thr182 bears the Phosphothreonine mark. The segment at 305-315 is calmodulin-binding; it reads KGAVLAAVSSH. Ser313 bears the Phosphoserine mark. L27 domains are found at residues 343 to 398 and 402 to 455; these read AERA…SPQI and PSDA…YSDE. The segment at 482-909 is required for interaction with NRXN1 (via C-terminal tail); the sequence is MENVTRVRLV…DETIRHLEEA (428 aa). Positions 490–571 constitute a PDZ domain; it reads LVQFQKNTDE…SITFKIVPSY (82 aa). Phosphoserine occurs at positions 570 and 571. Residues 574–610 form a disordered region; the sequence is QSSSCERDSPSTSRQSPANGHSSTNNSVSDLPSTTQP. Residues 612–682 enclose the SH3 domain; sequence GRQIYVRAQF…PSPELQEWRV (71 aa). In terms of domain architecture, Guanylate kinase-like spans 739-911; it reads RKTLVLLGAH…TIRHLEEAVE (173 aa).

In the N-terminal section; belongs to the protein kinase superfamily. CAMK Ser/Thr protein kinase family. CaMK subfamily. The protein belongs to the MAGUK family. In terms of assembly, CASK and LIN7 form a tripartite complex with CASKIN1. Component of the brain-specific heterotrimeric complex (LIN-10-LIN-2-LIN-7 complex) composed of at least APBA1, CASK, and LIN7, which associates with the motor protein KIF17 to transport vesicles along microtubules. Forms a heterotrimeric complex with DLG1 and LIN7B via their L27 domains. Identified in a complex with ACTN4, IQGAP1, MAGI2, NPHS1, SPTAN1 and SPTBN1. Part of a complex containing CASK, TBR1 and TSPYL2. Interacts with WHRN. Interacts (via the PDZ, SH3 and guanylate kinase-like domains) with NRXN1 (via C-terminus). Interacts with CASKIN1, APBA1, LIN7(A/B/C), and L27 domain of DLG1 and isoform 2 of DLG4. Interacts with FCHSD2. Interacts with KIRREL3. Interacts with TBR1. Interacts with TSPYL2. It depends on Unlike other protein kinases, does not require a divalent cation such as magnesium for catalytic activity. as a cofactor.

The protein resides in the nucleus. It localises to the cytoplasm. It is found in the cell membrane. The enzyme catalyses L-seryl-[protein] + ATP = O-phospho-L-seryl-[protein] + ADP + H(+). It carries out the reaction L-threonyl-[protein] + ATP = O-phospho-L-threonyl-[protein] + ADP + H(+). Its activity is regulated as follows. Differs from archetypal CaMK members in that the kinase domain exhibits a constitutively active conformation and the autoinhibitory region does not engage in direct contact with the ATP-binding cleft, although it still binds Ca(2+)/CAM. Multidomain scaffolding Mg(2+)-independent protein kinase that catalyzes the phosphotransfer from ATP to proteins such as NRXN1, and plays a role in synaptic transmembrane protein anchoring and ion channel trafficking. Contributes to neural development and regulation of gene expression via interaction with the transcription factor TBR1. Binds to cell-surface proteins, including amyloid precursor protein, neurexins, and syndecans. May mediate a link between the extracellular matrix and the actin cytoskeleton via its interaction with syndecan and with the actin/spectrin-binding protein 4.1. Component of the LIN-10-LIN-2-LIN-7 complex, which associates with the motor protein KIF17 to transport vesicles containing N-methyl-D-aspartate (NMDA) receptor subunit NR2B along microtubules. In Mus musculus (Mouse), this protein is Peripheral plasma membrane protein CASK.